A 507-amino-acid polypeptide reads, in one-letter code: BPI fold-containing family C protein (507 aa).

The signal sequence occupies residues 1 to 23 (MCTKTIPVLWGCFLLWNLYVSSS). 3 N-linked (GlcNAc...) asparagine glycosylation sites follow: Asn-79, Asn-92, and Asn-113. Cys-161 and Cys-200 are disulfide-bonded. N-linked (GlcNAc...) asparagine glycans are attached at residues Asn-213, Asn-225, Asn-257, Asn-301, Asn-355, Asn-372, and Asn-415.

Belongs to the BPI/LBP/Plunc superfamily. BPI/LBP family. As to expression, detected in the basal layer of the epidermis from inflammatory skin from psoriasis patients, but not in normal skin.

Its subcellular location is the secreted. This is BPI fold-containing family C protein (BPIFC) from Homo sapiens (Human).